Consider the following 631-residue polypeptide: Leukocyte immunoglobulin-like receptor subfamily B member 3 (631 aa).

An N-terminal signal peptide occupies residues 1–23 (MTPALTALLCLGLSLGPRTRVQA). Residues 24-443 (GPFPKPTLWA…STPGLGRYLE (420 aa)) lie on the Extracellular side of the membrane. 4 consecutive Ig-like C2-type domains span residues 42-100 (GSPV…RCHY), 111-229 (DPLE…SLLT), 225-314 (PSLL…DPLN), and 338-419 (GENV…LVVS). The cysteines at positions 49 and 98 are disulfide-linked. Residues 59–70 (RLHKEGSPEPLD) show a composition bias toward basic and acidic residues. The disordered stretch occupies residues 59 to 78 (RLHKEGSPEPLDRNNPLEPK). The N-linked (GlcNAc...) asparagine glycan is linked to Asn139. Disulfide bonds link Cys144–Cys196 and Cys245–Cys296. N-linked (GlcNAc...) asparagine glycans are attached at residues Asn280, Asn301, and Asn340. A disulfide bridge links Cys345 with Cys396. Residues 444-464 (VLIGVSVAFVLLLFLLLFLLL) form a helical membrane-spanning segment. The Cytoplasmic portion of the chain corresponds to 465–631 (RRQRHSKHRT…PSIYATLAIH (167 aa)). The disordered stretch occupies residues 470–631 (SKHRTSDQRK…PSIYATLAIH (162 aa)). Over residues 473-482 (RTSDQRKTDF) the composition is skewed to basic and acidic residues. The ITIM motif 1 signature appears at 512–517 (NLYAAV). 2 stretches are compositionally biased toward basic and acidic residues: residues 520–537 (TQSE…HDED) and 567–581 (LDTK…RQMD). Residues 588–600 (EASQDVTYAQLHS) show a composition bias toward polar residues. 2 consecutive short sequence motifs (ITIM motif) follow at residues 593–598 (VTYAQL) and 623–628 (SIYATL). Tyr595 and Tyr625 each carry phosphotyrosine; by LYN.

As to quaternary structure, interacts with LYN, PTPN6/SHP-1 and PTPN11/SHP-2. Phosphorylated on tyrosine residues by LYN. Phosphorylation at Tyr-595 and Tyr-625 is important for interaction with PTPN6/SHP-1 and PTPN11/SHP-2. Detected in monocytes and B-cells.

The protein localises to the cell membrane. May act as receptor for class I MHC antigens. Becomes activated upon coligation of LILRB3 and immune receptors, such as FCGR2B and the B-cell receptor. Down-regulates antigen-induced B-cell activation by recruiting phosphatases to its immunoreceptor tyrosine-based inhibitor motifs (ITIM). The polypeptide is Leukocyte immunoglobulin-like receptor subfamily B member 3 (LILRB3) (Homo sapiens (Human)).